The following is a 340-amino-acid chain: GTPase Obg (340 aa).

The Obg domain maps to 1-159 (MGFIDEVKLC…KHVLLKLKVL (159 aa)). Residues 160–329 (SDVGIIGMPN…LSEKLKKSNS (170 aa)) enclose the OBG-type G domain. GTP-binding positions include 166–173 (GMPNAGKS), 191–195 (FTTVR), 212–215 (DIPG), 279–282 (NKCD), and 310–312 (NGD). Mg(2+) contacts are provided by Ser173 and Thr193.

It belongs to the TRAFAC class OBG-HflX-like GTPase superfamily. OBG GTPase family. Monomer. Mg(2+) serves as cofactor.

It localises to the cytoplasm. Its function is as follows. An essential GTPase which binds GTP, GDP and possibly (p)ppGpp with moderate affinity, with high nucleotide exchange rates and a fairly low GTP hydrolysis rate. Plays a role in control of the cell cycle, stress response, ribosome biogenesis and in those bacteria that undergo differentiation, in morphogenesis control. This chain is GTPase Obg, found in Wolbachia pipientis wMel.